Consider the following 1148-residue polypeptide: Transcription-repair-coupling factor (1148 aa).

Positions Asp615–Ile776 constitute a Helicase ATP-binding domain. Gly628–Thr635 is an ATP binding site. Positions Asp729–His732 match the DEEH box motif. The Helicase C-terminal domain occupies Val798–Glu951.

In the N-terminal section; belongs to the UvrB family. It in the C-terminal section; belongs to the helicase family. RecG subfamily. As to quaternary structure, monomer. Interacts with UvrA and RNAP.

It is found in the cytoplasm. Couples transcription and DNA repair by recognizing RNA polymerase (RNAP) stalled at DNA lesions. Mediates ATP-dependent release of RNAP and its truncated transcript from the DNA, and recruitment of nucleotide excision repair machinery to the damaged site. Can also dissociate RNAP that is blocked by low concentration of nucleoside triphosphates or by physical obstruction, such as bound proteins. In addition, can rescue arrested complexes by promoting forward translocation. Has ATPase activity, which is required for removal of stalled RNAP, but seems to lack helicase activity. May act through a translocase activity that rewinds upstream DNA, leading either to translocation or to release of RNAP when the enzyme active site cannot continue elongation. This chain is Transcription-repair-coupling factor, found in Escherichia coli (strain K12).